We begin with the raw amino-acid sequence, 158 residues long: 6,7-dimethyl-8-ribityllumazine synthase (158 aa).

Residues F22, 57–59, and 81–83 each bind 5-amino-6-(D-ribitylamino)uracil; these read AFE and AVI. Position 86–87 (86–87) interacts with (2S)-2-hydroxy-3-oxobutyl phosphate; sequence GT. The Proton donor role is filled by H89. 5-amino-6-(D-ribitylamino)uracil is bound at residue F114. R128 provides a ligand contact to (2S)-2-hydroxy-3-oxobutyl phosphate.

This sequence belongs to the DMRL synthase family. Forms an icosahedral capsid composed of 60 subunits, arranged as a dodecamer of pentamers.

The enzyme catalyses (2S)-2-hydroxy-3-oxobutyl phosphate + 5-amino-6-(D-ribitylamino)uracil = 6,7-dimethyl-8-(1-D-ribityl)lumazine + phosphate + 2 H2O + H(+). The protein operates within cofactor biosynthesis; riboflavin biosynthesis; riboflavin from 2-hydroxy-3-oxobutyl phosphate and 5-amino-6-(D-ribitylamino)uracil: step 1/2. Catalyzes the formation of 6,7-dimethyl-8-ribityllumazine by condensation of 5-amino-6-(D-ribitylamino)uracil with 3,4-dihydroxy-2-butanone 4-phosphate. This is the penultimate step in the biosynthesis of riboflavin. The chain is 6,7-dimethyl-8-ribityllumazine synthase from Shewanella amazonensis (strain ATCC BAA-1098 / SB2B).